The chain runs to 438 residues: Adenylosuccinate synthetase (438 aa).

GTP-binding positions include 13 to 19 (GDEGKGK) and 41 to 43 (GHT). D14 acts as the Proton acceptor in catalysis. Mg(2+) contacts are provided by D14 and G41. IMP-binding positions include 14 to 17 (DEGK), 39 to 42 (NAGH), T130, R144, Q225, T240, and R310. H42 functions as the Proton donor in the catalytic mechanism. 306 to 312 (ATTGRLR) provides a ligand contact to substrate. GTP contacts are provided by residues R312, 338–340 (KLD), and 421–423 (STG).

The protein belongs to the adenylosuccinate synthetase family. In terms of assembly, homodimer. Mg(2+) serves as cofactor.

It is found in the cytoplasm. It catalyses the reaction IMP + L-aspartate + GTP = N(6)-(1,2-dicarboxyethyl)-AMP + GDP + phosphate + 2 H(+). Its pathway is purine metabolism; AMP biosynthesis via de novo pathway; AMP from IMP: step 1/2. Functionally, plays an important role in the de novo pathway of purine nucleotide biosynthesis. Catalyzes the first committed step in the biosynthesis of AMP from IMP. The sequence is that of Adenylosuccinate synthetase from Vibrio parahaemolyticus serotype O3:K6 (strain RIMD 2210633).